The sequence spans 361 residues: MERITVTLGERSYPITIAAGLFDDPASFMPLKAGDQAMLVTNQTLAPLYLDCVRGVLENHGVHVDQVILPDGEQYKSLTVLDQVFTALLAKPHGRDTTIVALGGGVIGDLAGFAAASYQRGVRFLQVPTTLLSQVDSSVGGKTAVNHPLGKNMIGAFYQPVSVVIDLDCLKSLPARELSSGLAEVIKYGIILDRDFFLWLEENIEAVRELQHDALAYCIRRCCEIKAAVVAADERENSMRALLNLGHTYGHAIEAEMGYGNWLHGEAVAAGMVMAAHTARRLGQFSDSDVERVKSLLVRAGLPVNGPTQMTPESYLPHMMRDKKVLAGELRLVLPTAIGQSEVRGGVAHDMVLASIADCLA.

NAD(+)-binding positions include 71–76, 105–109, 129–130, lysine 142, and lysine 151; these read DGEQYK, GVIGD, and TT. Residues glutamate 184, histidine 247, and histidine 264 each coordinate Zn(2+).

It belongs to the sugar phosphate cyclases superfamily. Dehydroquinate synthase family. Co(2+) is required as a cofactor. Zn(2+) serves as cofactor. The cofactor is NAD(+).

The protein localises to the cytoplasm. The catalysed reaction is 7-phospho-2-dehydro-3-deoxy-D-arabino-heptonate = 3-dehydroquinate + phosphate. Its pathway is metabolic intermediate biosynthesis; chorismate biosynthesis; chorismate from D-erythrose 4-phosphate and phosphoenolpyruvate: step 2/7. Its function is as follows. Catalyzes the conversion of 3-deoxy-D-arabino-heptulosonate 7-phosphate (DAHP) to dehydroquinate (DHQ). This is 3-dehydroquinate synthase from Pectobacterium atrosepticum (strain SCRI 1043 / ATCC BAA-672) (Erwinia carotovora subsp. atroseptica).